A 1037-amino-acid polypeptide reads, in one-letter code: Serine/threonine-protein kinase ULK2 (1037 aa).

The Protein kinase domain occupies 9–271 (YCKRDLVGHG…FEAFFSHPFL (263 aa)). Residues 15–23 (VGHGAFAVV) and K39 each bind ATP. Catalysis depends on D131, which acts as the Proton acceptor. Residues 319-350 (ENLSSPPLGPPNYLQVSKDSASNSSKNSSCDT) form a disordered region. Positions 335–348 (SKDSASNSSKNSSC) are enriched in low complexity. S430 is modified (phosphoserine). Disordered regions lie at residues 452-480 (CSPV…PSPL), 494-515 (GHPQ…PQTQ), 540-594 (QKLR…KTPL), and 626-697 (HGPA…NTER). Composition is skewed to polar residues over residues 506-515 (SSGSPVPQTQ) and 571-585 (LGTS…SPRN). Residues 632–643 (QSKDGNDPRECS) show a composition bias toward basic and acidic residues. The segment covering 658–678 (QQQSKAVFGRSVSTGKLSEQQ) has biased composition (polar residues). A phosphoserine mark is found at S772 and S781. The CTD-like region stretch occupies residues 813-1037 (ELPEETLMER…SALCCSTATV (225 aa)).

It belongs to the protein kinase superfamily. Ser/Thr protein kinase family. APG1/unc-51/ULK1 subfamily. Component of a complex consisting of ATG13/KIAA0652, ULK1 and RB1CC1/FIP200. Interacts (via C-terminus) with ATG13/KIAA0652. Associates with the mammalian target of rapamycin complex 1 (mTORC1) through an interaction with RPTOR. Interacts with SYNGAP1. Autophosphorylated. In response to nutrient limitation, probably phosphorylated and activated by AMPK, leading to activate autophagy. In terms of tissue distribution, widely expressed.

It localises to the cytoplasmic vesicle membrane. The catalysed reaction is L-seryl-[protein] + ATP = O-phospho-L-seryl-[protein] + ADP + H(+). The enzyme catalyses L-threonyl-[protein] + ATP = O-phospho-L-threonyl-[protein] + ADP + H(+). Serine/threonine-protein kinase involved in autophagy in response to starvation. Acts upstream of phosphatidylinositol 3-kinase PIK3C3 to regulate the formation of autophagophores, the precursors of autophagosomes. Part of regulatory feedback loops in autophagy: acts both as a downstream effector and a negative regulator of mammalian target of rapamycin complex 1 (mTORC1) via interaction with RPTOR. Activated via phosphorylation by AMPK, also acts as a negative regulator of AMPK through phosphorylation of the AMPK subunits PRKAA1, PRKAB2 and PRKAG1. May phosphorylate ATG13/KIAA0652, FRS2, FRS3 and RPTOR; however such data need additional evidences. Not involved in ammonia-induced autophagy or in autophagic response of cerebellar granule neurons (CGN) to low potassium concentration. Plays a role early in neuronal differentiation and is required for granule cell axon formation: may govern axon formation via Ras-like GTPase signaling and through regulation of the Rab5-mediated endocytic pathways within developing axons. This chain is Serine/threonine-protein kinase ULK2 (Ulk2), found in Mus musculus (Mouse).